Here is a 38-residue protein sequence, read N- to C-terminus: Alpha-conotoxin PeIA (38 aa).

Positions 1 to 21 are excised as a propeptide; that stretch reads FDGRNAAANDKASDLVALTVR. Disulfide bonds link C23-C29 and C24-C37. The interval 25–27 is ser-Xaa-Pro motif, crucial for potent interaction with nAChR; it reads SHP. Residue C37 is modified to Cysteine amide.

Belongs to the conotoxin A superfamily. The hydroxylation at position Pro-27 is critical, since an hydroxylation at this position decreases potency of the toxin to inhibit both alpha-3-beta-2 (1300-fold) and alpha-6/alpha-3-beta-2-beta-3 (130-fold) nAChRs. Post-translationally, a non-modified residue at position Pro-34 is critical, since a hydroxylation at this position decreases potency of the toxin to inhibit alpha-3-beta-2 (1-45-fold) and increases potency to inhibit alpha-6/alpha-3-beta-2-beta-3 (1.77-fold) nAChRs. Expressed by the venom duct.

Its subcellular location is the secreted. Its function is as follows. Alpha-conotoxins act on postsynaptic membranes, they bind to the nicotinic acetylcholine receptors (nAChR) and thus inhibit them. This synthetic peptide potently and reversibly blocks alpha-9-alpha-10/CHRNA9-CHRNA10 nAChR (IC(50)=6.9-54.9 nM), alpha-3-beta-2/CHRNA3-CHRNB2 (IC(50)=9.7-97.5 nM) and alpha-6/alpha-3-beta-2-beta-3 (CHRNA6/CHRNA3-CHRNB2-CHRNB3) (IC(50)=11.1-17.2 nM). It also inhibits alpha-6/alpha-3-beta-4 (CHRNA6/CHRNA3-CHRNB4) nAChR with a higher potency on human (IC(50)=6.75 nM) than on rat receptors (IC(50)=130-147 nM). Also shows a weak ability to inhibit alpha-3-beta-4/CHRNA3-CHRNB4 (IC(50)=480-1500 nM). This synthetic toxin also inhibits N-type calcium channels (Ca2.2/CACNA1B) (IC(50)=1.1 nM) via the activation of the G protein-coupled GABA(B) receptor in DRG neurons. Also exhibits inhibition of D.melanogaster alpha-7/CHRNA7 nAChRs. The chain is Alpha-conotoxin PeIA from Conus pergrandis (Grand cone).